The chain runs to 816 residues: tRNA(Met) cytidine acetyltransferase TmcA (816 aa).

Residues Q265 and R439 each contribute to the ATP site. Positions 469–664 (ELIRKMEVYL…YTAIVIKPIS (196 aa)) constitute an N-acetyltransferase domain. Residues 589–591 (IAT), E629, and R636 contribute to the acetyl-CoA site.

This sequence belongs to the TmcA family.

It is found in the cytoplasm. The enzyme catalyses cytidine(34) in elongator tRNA(Met) + acetyl-CoA + ATP + H2O = N(4)-acetylcytidine(34) in elongator tRNA(Met) + ADP + phosphate + CoA + H(+). It carries out the reaction a cytidine in RNA + acetyl-CoA + ATP + H2O = an N(4)-acetylcytidine in RNA + ADP + phosphate + CoA + H(+). It catalyses the reaction a cytidine in tRNA + acetyl-CoA + ATP + H2O = an N(4)-acetylcytidine in tRNA + ADP + phosphate + CoA + H(+). The catalysed reaction is a cytidine in mRNA + acetyl-CoA + ATP + H2O = an N(4)-acetylcytidine in mRNA + ADP + phosphate + CoA + H(+). Catalyzes the formation of N(4)-acetylcytidine (ac(4)C) at the wobble position of tRNA(Met), by using acetyl-CoA as an acetyl donor and ATP (or GTP). In terms of biological role, catalyzes the formation of 233 N(4)-acetylcytidine (ac(4)C) sites in RNA, on the middle C of a CCG motif. Modifications are found in rRNA, ncRNA, mRNA and tRNA. More acetylation is observed at 85 than at 65 or 75 degrees Celsius. This is tRNA(Met) cytidine acetyltransferase TmcA from Pyrococcus furiosus (strain ATCC 43587 / DSM 3638 / JCM 8422 / Vc1).